Consider the following 327-residue polypeptide: MKTLLILTILAMAITIGTANIQVDPSGQVQWLQQQLVPQLQQPLSQQPQQTFPQPQQTFPHQPQQQVPQPQQPQQPFLQPQQPFPQQPQQPFPQTQQPQQPFPQQPQQPFPQTQQPQQPFPQQPQQPFPQTQQPQQPFPQLQQPQQPFPQPQQQLPQPQQPQQSFPQQQRPFIQPSLQQQLNPCKNILLQQSKPASLVSSLWSIIWPQSDCQVMRQQCCQQLAQIPQQLQCAAIHSVVHSIIMQQQQQQQQQQGIDIFLPLSQHEQVGQGSLVQGQGIIQPQQPAQLEAIRSLVLQTLPSMCNVYVPPECSIMRAPFASIVAGIGGQ.

Positions 1 to 19 are cleaved as a signal peptide; that stretch reads MKTLLILTILAMAITIGTA. Residues 42-81 are compositionally biased toward low complexity; sequence QPLSQQPQQTFPQPQQTFPHQPQQQVPQPQQPQQPFLQPQ. The tract at residues 42-169 is disordered; that stretch reads QPLSQQPQQT…QPQQSFPQQQ (128 aa). Pro residues-rich tracts occupy residues 82–91, 100–109, and 118–127; these read QPFPQQPQQP. Over residues 128–169 the composition is skewed to low complexity; that stretch reads FPQTQQPQQPFPQLQQPQQPFPQPQQQLPQPQQPQQSFPQQQ.

The protein belongs to the gliadin/glutenin family.

Gliadin is the major seed storage protein in wheat. This chain is Gamma-gliadin, found in Triticum aestivum (Wheat).